The primary structure comprises 241 residues: ATP synthase subunit a (241 aa).

The next 8 helical transmembrane spans lie at 29 to 49 (NSSF…LFGI), 54 to 74 (VIPG…ISII), 86 to 106 (IPLI…GVLP), 114 to 134 (HVIV…IVGF), 153 to 173 (WLAP…PVSL), 177 to 197 (LAAN…FIVN), 200 to 220 (IFFT…EVFV), and 221 to 241 (AILQ…DAVK).

This sequence belongs to the ATPase A chain family. In terms of assembly, F-type ATPases have 2 components, CF(1) - the catalytic core - and CF(0) - the membrane proton channel. CF(1) has five subunits: alpha(3), beta(3), gamma(1), delta(1), epsilon(1). CF(0) has three main subunits: a(1), b(2) and c(9-12). The alpha and beta chains form an alternating ring which encloses part of the gamma chain. CF(1) is attached to CF(0) by a central stalk formed by the gamma and epsilon chains, while a peripheral stalk is formed by the delta and b chains.

The protein localises to the cell membrane. Its function is as follows. Key component of the proton channel; it plays a direct role in the translocation of protons across the membrane. The sequence is that of ATP synthase subunit a from Wolbachia pipientis wMel.